The following is a 321-amino-acid chain: Lipoyl synthase (321 aa).

7 residues coordinate [4Fe-4S] cluster: Cys-68, Cys-73, Cys-79, Cys-94, Cys-98, Cys-101, and Ser-308. A Radical SAM core domain is found at 80 to 297; that stretch reads FNHGTATFMI…KAEAMAMGFT (218 aa).

This sequence belongs to the radical SAM superfamily. Lipoyl synthase family. Requires [4Fe-4S] cluster as cofactor.

The protein resides in the cytoplasm. It carries out the reaction [[Fe-S] cluster scaffold protein carrying a second [4Fe-4S](2+) cluster] + N(6)-octanoyl-L-lysyl-[protein] + 2 oxidized [2Fe-2S]-[ferredoxin] + 2 S-adenosyl-L-methionine + 4 H(+) = [[Fe-S] cluster scaffold protein] + N(6)-[(R)-dihydrolipoyl]-L-lysyl-[protein] + 4 Fe(3+) + 2 hydrogen sulfide + 2 5'-deoxyadenosine + 2 L-methionine + 2 reduced [2Fe-2S]-[ferredoxin]. It participates in protein modification; protein lipoylation via endogenous pathway; protein N(6)-(lipoyl)lysine from octanoyl-[acyl-carrier-protein]: step 2/2. In terms of biological role, catalyzes the radical-mediated insertion of two sulfur atoms into the C-6 and C-8 positions of the octanoyl moiety bound to the lipoyl domains of lipoate-dependent enzymes, thereby converting the octanoylated domains into lipoylated derivatives. In Klebsiella pneumoniae (strain 342), this protein is Lipoyl synthase.